Here is a 136-residue protein sequence, read N- to C-terminus: Large ribosomal subunit protein uL16 (136 aa).

This sequence belongs to the universal ribosomal protein uL16 family. Part of the 50S ribosomal subunit.

Functionally, binds 23S rRNA and is also seen to make contacts with the A and possibly P site tRNAs. This is Large ribosomal subunit protein uL16 from Serratia proteamaculans (strain 568).